The sequence spans 446 residues: Enolase 1 (446 aa).

Substrate is bound by residues His164 and Glu173. Glu216 functions as the Proton donor in the catalytic mechanism. Asp251, Glu302, and Asp329 together coordinate Mg(2+). 2 residues coordinate substrate: Glu302 and Asp329. The active-site Proton acceptor is Lys354. Substrate contacts are provided by residues 381–384 and Lys405; that span reads SHRS.

Belongs to the enolase family. As to quaternary structure, homodimer. It depends on Mg(2+) as a cofactor.

Its subcellular location is the cytoplasm. The enzyme catalyses (2R)-2-phosphoglycerate = phosphoenolpyruvate + H2O. It functions in the pathway carbohydrate degradation; glycolysis; pyruvate from D-glyceraldehyde 3-phosphate: step 4/5. The protein is Enolase 1 (ENO1) of Zea mays (Maize).